Consider the following 545-residue polypeptide: Chaperonin GroEL 2 (545 aa).

ATP contacts are provided by residues 29 to 32 (TLGP), 86 to 90 (DGTTT), G413, 479 to 481 (NAA), and D495.

The protein belongs to the chaperonin (HSP60) family. Forms a cylinder of 14 subunits composed of two heptameric rings stacked back-to-back. Interacts with the co-chaperonin GroES.

The protein resides in the cytoplasm. The catalysed reaction is ATP + H2O + a folded polypeptide = ADP + phosphate + an unfolded polypeptide.. Functionally, together with its co-chaperonin GroES, plays an essential role in assisting protein folding. The GroEL-GroES system forms a nano-cage that allows encapsulation of the non-native substrate proteins and provides a physical environment optimized to promote and accelerate protein folding. The protein is Chaperonin GroEL 2 of Prochlorococcus marinus (strain MIT 9312).